The chain runs to 446 residues: Probable beta-1,4-xylosyltransferase IRX9L (446 aa).

The interval 1–26 (MSRRNAGAMQREGSVKDWEEFDPSPS) is disordered. At 1 to 85 (MSRRNAGAMQ…SRSKGMSLKR (85 aa)) the chain is on the cytoplasmic side. The chain crosses the membrane as a helical; Signal-anchor for type II membrane protein span at residues 86–106 (AMLQLLVCFMVGIFIGFTPPF). Over 107–446 (SVDLPGKIAS…RNLDAVVPIT (340 aa)) the chain is Lumenal. Asn185, Asn258, Asn361, and Asn411 each carry an N-linked (GlcNAc...) asparagine glycan.

This sequence belongs to the glycosyltransferase 43 family.

The protein resides in the golgi apparatus membrane. Probable beta-1,4-xylosyltransferase involved in xylan biosynthesis in cell walls. This chain is Probable beta-1,4-xylosyltransferase IRX9L, found in Oryza sativa subsp. japonica (Rice).